A 304-amino-acid polypeptide reads, in one-letter code: Dihydroorotate dehydrogenase B (NAD(+)), catalytic subunit (304 aa).

FMN is bound by residues Ser-21 and 45–46 (KA). Substrate is bound by residues Lys-45 and 69–73 (NAIGL). 2 residues coordinate FMN: Asn-99 and Asn-127. Asn-127 contributes to the substrate binding site. The active-site Nucleophile is Cys-130. 2 residues coordinate FMN: Lys-165 and Ile-191. Residue 192–193 (NT) participates in substrate binding. Residues Gly-217, 243–244 (GG), and 265–266 (GT) contribute to the FMN site.

The protein belongs to the dihydroorotate dehydrogenase family. Type 1 subfamily. In terms of assembly, heterotetramer of 2 PyrK and 2 PyrD type B subunits. FMN serves as cofactor.

It is found in the cytoplasm. It carries out the reaction (S)-dihydroorotate + NAD(+) = orotate + NADH + H(+). Its pathway is pyrimidine metabolism; UMP biosynthesis via de novo pathway; orotate from (S)-dihydroorotate (NAD(+) route): step 1/1. Functionally, catalyzes the conversion of dihydroorotate to orotate with NAD(+) as electron acceptor. This is Dihydroorotate dehydrogenase B (NAD(+)), catalytic subunit (pyrD) from Listeria welshimeri serovar 6b (strain ATCC 35897 / DSM 20650 / CCUG 15529 / CIP 8149 / NCTC 11857 / SLCC 5334 / V8).